The sequence spans 235 residues: Casparian strip membrane protein 2 (235 aa).

Residues methionine 1 to cysteine 70 are Cytoplasmic-facing. Residues leucine 71–isoleucine 91 traverse the membrane as a helical segment. Residues serine 92–alanine 118 lie on the Extracellular side of the membrane. Residues phenylalanine 119–phenylalanine 139 traverse the membrane as a helical segment. Residues serine 140–aspartate 162 lie on the Cytoplasmic side of the membrane. Residues valine 163–alanine 183 traverse the membrane as a helical segment. Residues histidine 184–valine 210 are Extracellular-facing. Residues valine 211 to isoleucine 231 traverse the membrane as a helical segment. The Cytoplasmic portion of the chain corresponds to arginine 232–lysine 235.

This sequence belongs to the Casparian strip membrane proteins (CASP) family. In terms of assembly, homodimer and heterodimers.

Its subcellular location is the cell membrane. Regulates membrane-cell wall junctions and localized cell wall deposition. Required for establishment of the Casparian strip membrane domain (CSD) and the subsequent formation of Casparian strips, a cell wall modification of the root endodermis that determines an apoplastic barrier between the intraorganismal apoplasm and the extraorganismal apoplasm and prevents lateral diffusion. The chain is Casparian strip membrane protein 2 from Sorghum bicolor (Sorghum).